We begin with the raw amino-acid sequence, 292 residues long: Cyclin-dependent kinase 5 (292 aa).

Residues 4 to 286 (YEKLEKIGEG…AEEALQHPYF (283 aa)) enclose the Protein kinase domain. Residues 10–18 (IGEGTYGTV) and Lys33 each bind ATP. Residue Tyr15 is modified to Phosphotyrosine; by ABL1, EPHA4 and FYN. Residue Thr17 is modified to Phosphothreonine. Position 56 is an N6-acetyllysine (Lys56). Ser72 is modified (phosphoserine). The active-site Proton acceptor is the Asp126. Ser159 is subject to Phosphoserine.

This sequence belongs to the protein kinase superfamily. CMGC Ser/Thr protein kinase family. CDC2/CDKX subfamily. Heterodimer composed of a catalytic subunit CDK5 and a regulatory subunit CDK5R1 (p25) and macromolecular complex composed of at least CDK5, CDK5R1 (p35) and CDK5RAP1 or CDK5RAP2 or CDK5RAP3. Only the heterodimer shows kinase activity. Under neurotoxic stress and neuronal injury conditions, p35 is cleaved by calpain to generate p25 that hyperactivates CDK5, that becomes functionally disabled and often toxic. Found in a trimolecular complex with CABLES1 and ABL1. Interacts with CABLES1 and CABLES2. Interacts with AATK and GSTP1. Binds to HDAC1 when in complex with p25. Interaction with myristoylation p35 promotes CDK5 association with membranes. Both isoforms 1 and 2 interacts with beta-catenin/CTNNB1. Interacts with delta-catenin/CTNND2 and APEX1. Interacts with P53/TP53 in neurons. Interacts with EPHA4; may mediate the activation of NGEF by EPHA4. Interacts with PTK2/FAK1. The complex p35/CDK5 interacts with CLOCK. Interacts with HTR6. In terms of processing, phosphorylation on Tyr-15 by ABL1 and FYN, and on Ser-159 by casein kinase 1 promotes kinase activity. By contrast, phosphorylation at Thr-14 inhibits activity. Phosphorylation at Ser-159 is essential for maximal catalytic activity. Ubiquitously expressed. Accumulates in cortical neurons (at protein level). In terms of tissue distribution, expressed in the testis, skeletal muscle, colon, bone marrow and ovary.

Its subcellular location is the cytoplasm. The protein localises to the nucleus. The protein resides in the cell membrane. It localises to the perikaryon. It is found in the cell projection. Its subcellular location is the lamellipodium. The protein localises to the growth cone. The protein resides in the postsynaptic density. It localises to the synapse. The catalysed reaction is L-seryl-[protein] + ATP = O-phospho-L-seryl-[protein] + ADP + H(+). The enzyme catalyses L-threonyl-[protein] + ATP = O-phospho-L-threonyl-[protein] + ADP + H(+). With respect to regulation, inhibited by 2-(1-ethyl-2-hydroxyethylamino)-6-benzylamino-9-isopropylpurine (roscovitine), 1-isopropyl-4-aminobenzyl-6-ether-linked benzimidazoles, resveratrol, AT-7519 and olomoucine. Activated by CDK5R1 (p35) and CDK5R2 (p39) during the development of the nervous system; degradation of CDK5R1 (p35) and CDK5R2 (p39) by proteasome result in down regulation of kinase activity, during this process, CDK5 phosphorylates p35 and induces its ubiquitination and subsequent degradation. Kinase activity is mainly determined by the amount of p35 available and subcellular location; reversible association to plasma membrane inhibits activity. Long-term inactivation as well as CDK5R1 (p25)-mediated hyperactivation of CDK5 triggers cell death. The pro-death activity of hyperactivated CDK5 is suppressed by membrane association of CDK5, via myristoylation of p35. Brain-derived neurotrophic factor, glial-derived neurotrophic factor, nerve growth factor (NGF), retinoic acid, laminin and neuregulin promote activity. Neurotoxicity enhances nuclear activity, thus leading to MEF2 phosphorylation and inhibition prior to apoptosis of cortical neurons. Repression by GSTP1 via p25/p35 translocation prevents neurodegeneration. Proline-directed serine/threonine-protein kinase essential for neuronal cell cycle arrest and differentiation and may be involved in apoptotic cell death in neuronal diseases by triggering abortive cell cycle re-entry. Interacts with D1 and D3-type G1 cyclins. Phosphorylates SRC, NOS3, VIM/vimentin, p35/CDK5R1, MEF2A, SIPA1L1, SH3GLB1, PXN, PAK1, MCAM/MUC18, SEPT5, SYN1, DNM1, AMPH, SYNJ1, CDK16, RAC1, RHOA, CDC42, TONEBP/NFAT5, MAPT/TAU, MAP1B, histone H1, p53/TP53, HDAC1, APEX1, PTK2/FAK1, huntingtin/HTT, ATM, MAP2, NEFH and NEFM. Regulates several neuronal development and physiological processes including neuronal survival, migration and differentiation, axonal and neurite growth, synaptogenesis, oligodendrocyte differentiation, synaptic plasticity and neurotransmission, by phosphorylating key proteins. Negatively regulates the CACNA1B/CAV2.2 -mediated Ca(2+) release probability at hippocampal neuronal soma and synaptic terminals. Activated by interaction with CDK5R1 (p35) and CDK5R2 (p39), especially in postmitotic neurons, and promotes CDK5R1 (p35) expression in an autostimulation loop. Phosphorylates many downstream substrates such as Rho and Ras family small GTPases (e.g. PAK1, RAC1, RHOA, CDC42) or microtubule-binding proteins (e.g. MAPT/TAU, MAP2, MAP1B), and modulates actin dynamics to regulate neurite growth and/or spine morphogenesis. Also phosphorylates exocytosis associated proteins such as MCAM/MUC18, SEPT5, SYN1, and CDK16/PCTAIRE1 as well as endocytosis associated proteins such as DNM1, AMPH and SYNJ1 at synaptic terminals. In the mature central nervous system (CNS), regulates neurotransmitter movements by phosphorylating substrates associated with neurotransmitter release and synapse plasticity; synaptic vesicle exocytosis, vesicles fusion with the presynaptic membrane, and endocytosis. Promotes cell survival by activating anti-apoptotic proteins BCL2 and STAT3, and negatively regulating of JNK3/MAPK10 activity. Phosphorylation of p53/TP53 in response to genotoxic and oxidative stresses enhances its stabilization by preventing ubiquitin ligase-mediated proteasomal degradation, and induces transactivation of p53/TP53 target genes, thus regulating apoptosis. Phosphorylation of p35/CDK5R1 enhances its stabilization by preventing calpain-mediated proteolysis producing p25/CDK5R1 and avoiding ubiquitin ligase-mediated proteasomal degradation. During aberrant cell-cycle activity and DNA damage, p25/CDK5 activity elicits cell-cycle activity and double-strand DNA breaks that precedes neuronal death by deregulating HDAC1. DNA damage triggered phosphorylation of huntingtin/HTT in nuclei of neurons protects neurons against polyglutamine expansion as well as DNA damage mediated toxicity. Phosphorylation of PXN reduces its interaction with PTK2/FAK1 in matrix-cell focal adhesions (MCFA) during oligodendrocytes (OLs) differentiation. Negative regulator of Wnt/beta-catenin signaling pathway. Activator of the GAIT (IFN-gamma-activated inhibitor of translation) pathway, which suppresses expression of a post-transcriptional regulon of proinflammatory genes in myeloid cells; phosphorylates the linker domain of glutamyl-prolyl tRNA synthetase (EPRS) in a IFN-gamma-dependent manner, the initial event in assembly of the GAIT complex. Phosphorylation of SH3GLB1 is required for autophagy induction in starved neurons. Phosphorylation of TONEBP/NFAT5 in response to osmotic stress mediates its rapid nuclear localization. MEF2 is inactivated by phosphorylation in nucleus in response to neurotoxin, thus leading to neuronal apoptosis. APEX1 AP-endodeoxyribonuclease is repressed by phosphorylation, resulting in accumulation of DNA damage and contributing to neuronal death. NOS3 phosphorylation down regulates NOS3-derived nitrite (NO) levels. SRC phosphorylation mediates its ubiquitin-dependent degradation and thus leads to cytoskeletal reorganization. May regulate endothelial cell migration and angiogenesis via the modulation of lamellipodia formation. Involved in dendritic spine morphogenesis by mediating the EFNA1-EPHA4 signaling. The complex p35/CDK5 participates in the regulation of the circadian clock by modulating the function of CLOCK protein: phosphorylates CLOCK at 'Thr-451' and 'Thr-461' and regulates the transcriptional activity of the CLOCK-BMAL1 heterodimer in association with altered stability and subcellular distribution. This chain is Cyclin-dependent kinase 5, found in Homo sapiens (Human).